The primary structure comprises 533 residues: WD repeat-containing protein JIP5 (533 aa).

5 WD repeats span residues 26–67, 84–130, 176–215, 264–309, and 372–409; these read NYSD…EKQS, GKVS…GSCR, NSNDSITKLCHSATNSCLLAGTENGHVLVYDSKNLGGSKL, NQDD…FMDQ, and GAADEVGLLEIDYDYRLISAGMESLKIWSNEQNEEIAL. 2 stretches are compositionally biased toward acidic residues: residues 408 to 428 and 437 to 452; these read ALDESDDSDDESDSDNSEDDL and ASDEEIEENKEEEDEK. A disordered region spans residues 408-533; that stretch reads ALDESDDSDD…EHGIRRFDDL (126 aa). Basic and acidic residues-rich tracts occupy residues 453 to 463 and 521 to 533; these read EDKPVKIDHPL and QKHEHGIRRFDDL.

This sequence belongs to the WD repeat WDR55 family.

It is found in the nucleus. Its subcellular location is the nucleolus. This chain is WD repeat-containing protein JIP5 (JIP5), found in Scheffersomyces stipitis (strain ATCC 58785 / CBS 6054 / NBRC 10063 / NRRL Y-11545) (Yeast).